The primary structure comprises 486 residues: FAD-dependent oxidoreductase domain-containing protein 1 (486 aa).

A helical transmembrane segment spans residues 66–86 (VVVVGGGVLGLSVAYWLKQLE).

As to quaternary structure, associates with components of the mitochondrial respiratory chain complex I. It depends on FAD as a cofactor.

The protein localises to the mitochondrion inner membrane. Functionally, required for the assembly of the mitochondrial membrane respiratory chain NADH dehydrogenase (Complex I). Involved in mid-late stages of complex I assembly. This is FAD-dependent oxidoreductase domain-containing protein 1 (FOXRED1) from Macaca fascicularis (Crab-eating macaque).